Here is a 375-residue protein sequence, read N- to C-terminus: Lipid-A-disaccharide synthase (375 aa).

Belongs to the LpxB family.

The catalysed reaction is a lipid X + a UDP-2-N,3-O-bis[(3R)-3-hydroxyacyl]-alpha-D-glucosamine = a lipid A disaccharide + UDP + H(+). The protein operates within bacterial outer membrane biogenesis; LPS lipid A biosynthesis. In terms of biological role, condensation of UDP-2,3-diacylglucosamine and 2,3-diacylglucosamine-1-phosphate to form lipid A disaccharide, a precursor of lipid A, a phosphorylated glycolipid that anchors the lipopolysaccharide to the outer membrane of the cell. The protein is Lipid-A-disaccharide synthase of Pseudomonas entomophila (strain L48).